A 127-amino-acid chain; its full sequence is MLSSLLAVFIGGGMGSVLRWAISMKMNPLNAHIPLGTLAVNLLGGFIIGLAIAIFSRLTHLDPTWKLLITTGFCGGLTTFSTFSLEVVYLLQDGRFMWALANMLLNLAGSLVMTLLAFMLVVWINGQ.

Transmembrane regions (helical) follow at residues Leu-2 to Ile-22, Leu-35 to Phe-55, Leu-68 to Val-88, and Leu-104 to Ile-124. Gly-75 and Thr-78 together coordinate Na(+).

It belongs to the fluoride channel Fluc/FEX (TC 1.A.43) family.

Its subcellular location is the cell inner membrane. It catalyses the reaction fluoride(in) = fluoride(out). Na(+) is not transported, but it plays an essential structural role and its presence is essential for fluoride channel function. In terms of biological role, fluoride-specific ion channel. Important for reducing fluoride concentration in the cell, thus reducing its toxicity. In Serratia proteamaculans (strain 568), this protein is Fluoride-specific ion channel FluC.